Consider the following 226-residue polypeptide: NADH-quinone oxidoreductase subunit C (226 aa).

Positions 1 to 21 (MTEPTGDQTPEIIGVRRGMFG) are disordered.

The protein belongs to the complex I 30 kDa subunit family. In terms of assembly, NDH-1 is composed of 14 different subunits. Subunits NuoB, C, D, E, F, and G constitute the peripheral sector of the complex.

The protein localises to the cell membrane. It carries out the reaction a quinone + NADH + 5 H(+)(in) = a quinol + NAD(+) + 4 H(+)(out). NDH-1 shuttles electrons from NADH, via FMN and iron-sulfur (Fe-S) centers, to quinones in the respiratory chain. The immediate electron acceptor for the enzyme in this species is believed to be a menaquinone. Couples the redox reaction to proton translocation (for every two electrons transferred, four hydrogen ions are translocated across the cytoplasmic membrane), and thus conserves the redox energy in a proton gradient. The polypeptide is NADH-quinone oxidoreductase subunit C (Mycolicibacterium gilvum (strain PYR-GCK) (Mycobacterium gilvum (strain PYR-GCK))).